The sequence spans 178 residues: Ribonuclease M5 (178 aa).

The Toprim domain maps to 10–94 (DGVIVCEGKT…YVDMNARLKN (85 aa)). 3 residues coordinate Mg(2+): E16, D62, and D64.

The protein belongs to the ribonuclease M5 family. Mg(2+) is required as a cofactor.

It localises to the cytoplasm. It catalyses the reaction Endonucleolytic cleavage of RNA, removing 21 and 42 nucleotides, respectively, from the 5'- and 3'-termini of a 5S-rRNA precursor.. Functionally, required for correct processing of both the 5' and 3' ends of 5S rRNA precursor. Cleaves both sides of a double-stranded region yielding mature 5S rRNA in one step. This chain is Ribonuclease M5 (rnmV), found in Mycoplasma genitalium (strain ATCC 33530 / DSM 19775 / NCTC 10195 / G37) (Mycoplasmoides genitalium).